The primary structure comprises 385 residues: Alkanesulfonate monooxygenase (385 aa).

Belongs to the SsuD family.

The enzyme catalyses an alkanesulfonate + FMNH2 + O2 = an aldehyde + FMN + sulfite + H2O + 2 H(+). Functionally, catalyzes the desulfonation of aliphatic sulfonates. This Burkholderia pseudomallei (strain 1710b) protein is Alkanesulfonate monooxygenase.